The primary structure comprises 1292 residues: Zinc finger protein 423 (1292 aa).

Residues 1-11 (MSRRKQAKPRS) are compositionally biased toward basic residues. Disordered regions lie at residues 1-21 (MSRR…EASD), 33-70 (AGGL…EDVE), and 95-125 (AHRC…SPTQ). The span at 41-54 (ECDRKTSRALEDRN) shows a compositional bias: basic and acidic residues. Serine 55 and serine 58 each carry phosphoserine. The segment at 75–101 (YTCDHCQQDFESLADLTDHRAHRCPGD) adopts a C2H2-type 1; degenerate zinc-finger fold. Over residues 110 to 125 (WVASSPSSKDVASPTQ) the composition is skewed to polar residues. 7 C2H2-type zinc fingers span residues 146–168 (YPCQ…EQIH), 174–196 (FKCT…IKLH), 202–224 (YHCH…LKTH), 230–252 (FKCS…MQAH), 271–294 (FMCD…LTLH), 303–326 (LQCI…HQAH), and 331–353 (HKCP…LDSH). Residues 354–407 (RQPDSSNHSVSPDPVLGSVASMSSATPDSSASVERGSTPDSTLKPLRGQKKMRD) are disordered. Residues 371 to 385 (SVASMSSATPDSSAS) show a composition bias toward low complexity. The C2H2-type 9; degenerate zinc finger occupies 417–441 (YSCPYCSKRDFTSLAVLEIHLKTIH). C2H2-type zinc fingers lie at residues 449–472 (HTCQ…RKLH), 488–511 (FHCN…RVSH), and 525–548 (FFCN…QQAH). The segment at 571 to 596 (YSCPYCTNSPIFGSILKLTKHIKENH) adopts a C2H2-type 13; atypical zinc-finger fold. Residues 598-635 (NIPLAHSKKSKAEQSPVSSDVEVSSPKRQRLSGSANSI) are disordered. At serine 612 the chain carries Phosphoserine. Residues 612–623 (SPVSSDVEVSSP) show a composition bias toward low complexity. C2H2-type zinc fingers lie at residues 640–662 (YPCN…LKLH), 670–692 (QACP…LTVH), 700–723 (YVCE…LDMH), 728–751 (YHCT…AVKH), 758–781 (YRCT…KHSH), 789–811 (HKCI…ITTH), and 815–838 (YNCR…REKH). The C2H2-type 21; degenerate zinc-finger motif lies at 894-916 (YGCDICGAAYTMEVLLQNHRLRD). C2H2-type zinc fingers lie at residues 938 to 960 (HKCN…LQTH), 967 to 989 (YMCP…KVTH), and 1028 to 1050 (FRCV…GTFH). Serine 1062 bears the Phosphoserine mark. A C2H2-type 25; degenerate zinc finger spans residues 1072–1090 (YKCALCLKEFRSKQDLVRL). 5 consecutive C2H2-type zinc fingers follow at residues 1128–1151 (LRCP…QVDH), 1176–1198 (YQCI…VANH), 1206–1228 (HECK…LIEH), 1237–1260 (FKCP…FAVH), and 1267–1290 (YDCS…MSQH). The segment covering 1144–1155 (ESHMQVDHRDLT) has biased composition (basic and acidic residues). The tract at residues 1144-1171 (ESHMQVDHRDLTPETSGPRKGAQTSPVP) is disordered.

It belongs to the krueppel C2H2-type zinc-finger protein family. Homodimer. Interacts with SMAD1 and SMAD4. Interacts with EBF1. Interacts with PARP1. Interacts with CEP290. Within the cerebellum, Zfp423 is expressed in both ventricular and external germinal zones. Transiently expressed in newly differentiating olfactory-receptor neurons.

Its subcellular location is the nucleus. In terms of biological role, transcription factor that can both act as an activator or a repressor depending on the context. Plays a central role in BMP signaling and olfactory neurogenesis. Associates with SMADs in response to BMP2 leading to activate transcription of BMP target genes. Acts as a transcriptional repressor via its interaction with EBF1, a transcription factor involved in terminal olfactory receptor neurons differentiation; this interaction preventing EBF1 to bind DNA and activate olfactory-specific genes. Involved in olfactory neurogenesis by participating in a developmental switch that regulates the transition from differentiation to maturation in olfactory receptor neurons. Controls proliferation and differentiation of neural precursors in cerebellar vermis formation. In Mus musculus (Mouse), this protein is Zinc finger protein 423 (Znf423).